We begin with the raw amino-acid sequence, 716 residues long: Calpain-1 catalytic subunit (716 aa).

The 300-residue stretch at 55 to 354 folds into the Calpain catalytic domain; that stretch reads LFRDEAFPPV…FTRLEICNLT (300 aa). Positions 109 and 114 each coordinate Ca(2+). Catalysis depends on residues Cys-115, His-272, and Asn-296. Ca(2+) contacts are provided by Asp-318 and Glu-323. The residue at position 354 (Thr-354) is a Phosphothreonine. The domain III stretch occupies residues 355–528; that stretch reads PDALKSQRFR…KSAGTQELDD (174 aa). A linker region spans residues 529-544; it reads QVQANLPDEQVLSEEE. EF-hand domains lie at 543 to 578, 587 to 620, 617 to 652, and 682 to 716; these read EEID…IISK, FSLE…NRIR, NRIR…AGFK, and VRLE…TMFA. Residues 545–715 are domain IV; sequence IDENFKSLFR…LFKWLQLTMF (171 aa). Residues Asp-600, Asp-602, Asn-604, Lys-606, Glu-611, Asp-630, Asp-632, Ser-634, Ser-636, and Glu-641 each contribute to the Ca(2+) site.

This sequence belongs to the peptidase C2 family. In terms of assembly, forms a heterodimer with a small (regulatory) subunit CAPNS1. Requires Ca(2+) as cofactor. Post-translationally, undergoes calcium-induced successive autoproteolytic cleavages that generate a membrane-bound 78 kDa active form and an intracellular 75 kDa active form. Calpastatin reduces with high efficiency the transition from 78 kDa to 75 kDa calpain forms.

The protein resides in the cytoplasm. It is found in the cell membrane. The catalysed reaction is Broad endopeptidase specificity.. With respect to regulation, activated by micromolar concentrations of calcium and inhibited by calpastatin. In terms of biological role, calcium-regulated non-lysosomal thiol-protease which catalyzes limited proteolysis of substrates involved in cytoskeletal remodeling and signal transduction. Proteolytically cleaves CTBP1. Cleaves and activates caspase-7 (CASP7). The protein is Calpain-1 catalytic subunit of Bos taurus (Bovine).